We begin with the raw amino-acid sequence, 316 residues long: Alpha- and gamma-adaptin-binding protein p34 (316 aa).

The interval 198–232 (ASAESCHSEQQEPSPTAERTESLPGHHSGACGSAG) is disordered. Low complexity predominate over residues 222-232 (GHHSGACGSAG). A phosphoserine mark is found at serine 311 and serine 312.

Associated with AP-1 and AP-2 complexes.

The protein resides in the cytoplasm. It localises to the cytosol. Functionally, may be involved in endocytic recycling of growth factor receptors such as EGFR. This chain is Alpha- and gamma-adaptin-binding protein p34 (Aagab), found in Mus musculus (Mouse).